A 208-amino-acid chain; its full sequence is Coiled-coil domain-containing protein 25 (208 aa).

The Extracellular portion of the chain corresponds to 1–105; the sequence is MVFYFTSSSV…SNLKKTADMD (105 aa). The interval 21–25 is DNA-binding; it reads KDKYE. At K23 the chain carries N6-acetyllysine. Residues 106–122 form a helical membrane-spanning segment; sequence VGQIGFHRQKDVKIVTV. The stretch at 117-187 forms a coiled coil; that stretch reads VKIVTVEKKV…REMDELRSYS (71 aa). Residues 123 to 208 are Cytoplasmic-facing; the sequence is EKKVNEILNR…QDGNDSDEFM (86 aa). A compositionally biased stretch (basic and acidic residues) spans 145–184; that stretch reads EAEKECRDHEERNEKKAQIQEMKRREKEEMKKKREMDELR. The interval 145 to 208 is disordered; that stretch reads EAEKECRDHE…QDGNDSDEFM (64 aa). S204 carries the post-translational modification Phosphoserine.

It belongs to the CCDC25 family. Interacts (via cytoplasmic region) with ILK.

It is found in the cell membrane. The protein localises to the endomembrane system. Transmembrane receptor that senses neutrophil extracellular traps (NETs) and triggers the ILK-PARVB pathway to enhance cell motility. NETs are mainly composed of DNA fibers and are released by neutrophils to bind pathogens during inflammation. Formation of NETs is also associated with cancer metastasis, NET-DNA acting as a chemotactic factor to attract cancer cells. Specifically binds NETs on its extracellular region, in particular the 8-OHdG-enriched DNA present in NETs, and recruits ILK, initiating the ILK-PARVB cascade to induce cytoskeleton rearrangement and directional migration of cells. The chain is Coiled-coil domain-containing protein 25 from Bos taurus (Bovine).